A 942-amino-acid chain; its full sequence is MQNKIIIHGARAHNLKNIDVEIPRDKLVVVTGLSGSGKSSLAFDTIYAEGQRRYVESLSAYARQFLGNMEKPDVDSIDGLSPAISIDQKTTSKNPRSTVGTVTEINDYLRLLYARVGTPYCINGHGAITASSAEQIVEQVLALPERTRMQILAPIVRRKKGQHKTIFEKIQKDGYVRVRVDGDIFDVTEVPELSKSKMHNIEVVIDRLVNKDGIRSRLFDSVEAALRLGDGYLMIDTMDGNELLFSEHYSCPVCGFTVPELEPRLFSFNAPFGSCPTCDGLGIKLEVDLDLVVPDPSKSLKEGALAPWNPISSNYYPTMLEQAMASFGVDMDTPFEALTEEERDLVLYGSGDREFHFHYVNDFGGERNIDIPFEGVVTNVNRRYHETNSDYTRNVMRGYMNELTCATCHGYRLNDQALCVHVGGEEGPHIGQISELSIADHLQLLEELELTENESTIAKPIVKEIHDRLTFLNNVGLNYLTLSRAAGTLSGGESQRIRLATQIGSNLSGVLYILDEPSIGLHQRDNDRLIESLKKMRDLGNTLIVVEHDEDTMMQADWLIDVGPGAGEFGGEIIASGTPKQVAKNKKSITGQYLSGKKFIPVPLERRSGNGRFIEIKGAAQNNLQSLDVRFPLGKFIAVTGVSGSGKSTLVNSILKKAVAQKLNRNADKPGKYHSISGIEHIERLIDIDQSPIGRTPRSNPATYTGVFDDIRDLFAQTNEAKIRGYKKGRFSFNVKGGRCEACSGDGIIKIEMHFLPDVYVPCEVCHGRRYNSETLEVHYKEKNIAEVLDMTVDDALVFFSAIPKIARKIQTIKDVGLGYVTLGQPATTLSGGEAQRMKLASELHKRSTGKSLYILDEPTTGLHTDDIARLLKVLERFVDDGNTVLVIEHNLDVIKSADHIIDLGPEGGVGGGQIVATGTPEEVAQVKESYTGHYLKVKLQQ.

32 to 39 is a binding site for ATP; it reads GLSGSGKS. Residues 251-278 form a C4-type zinc finger; that stretch reads CPVCGFTVPELEPRLFSFNAPFGSCPTC. ABC transporter domains are found at residues 308-589 and 609-937; these read WNPI…KKSI and GNGR…HYLK. Residue 641–648 coordinates ATP; sequence GVSGSGKS. The segment at 740–766 adopts a C4-type zinc-finger fold; the sequence is CEACSGDGIIKIEMHFLPDVYVPCEVC.

This sequence belongs to the ABC transporter superfamily. UvrA family. In terms of assembly, forms a heterotetramer with UvrB during the search for lesions.

Its subcellular location is the cytoplasm. In terms of biological role, the UvrABC repair system catalyzes the recognition and processing of DNA lesions. UvrA is an ATPase and a DNA-binding protein. A damage recognition complex composed of 2 UvrA and 2 UvrB subunits scans DNA for abnormalities. When the presence of a lesion has been verified by UvrB, the UvrA molecules dissociate. The polypeptide is UvrABC system protein A (Streptococcus pyogenes serotype M3 (strain ATCC BAA-595 / MGAS315)).